A 393-amino-acid polypeptide reads, in one-letter code: Chorismate synthase (393 aa).

Residues Arg40 and Arg46 each contribute to the NADP(+) site. Residues 129 to 131, 249 to 250, Gly301, 316 to 320, and Arg342 contribute to the FMN site; these read RSS, QA, and KPIPT.

The protein belongs to the chorismate synthase family. In terms of assembly, homotetramer. The cofactor is FMNH2.

It carries out the reaction 5-O-(1-carboxyvinyl)-3-phosphoshikimate = chorismate + phosphate. Its pathway is metabolic intermediate biosynthesis; chorismate biosynthesis; chorismate from D-erythrose 4-phosphate and phosphoenolpyruvate: step 7/7. Catalyzes the anti-1,4-elimination of the C-3 phosphate and the C-6 proR hydrogen from 5-enolpyruvylshikimate-3-phosphate (EPSP) to yield chorismate, which is the branch point compound that serves as the starting substrate for the three terminal pathways of aromatic amino acid biosynthesis. This reaction introduces a second double bond into the aromatic ring system. This chain is Chorismate synthase, found in Pelobacter propionicus (strain DSM 2379 / NBRC 103807 / OttBd1).